The sequence spans 433 residues: uncharacterized protein (433 aa).

The protein belongs to the arrestin family.

This is an uncharacterized protein from Schizosaccharomyces pombe (strain 972 / ATCC 24843) (Fission yeast).